Here is a 194-residue protein sequence, read N- to C-terminus: Peptidyl-tRNA hydrolase (194 aa).

Position 17 (tyrosine 17) interacts with tRNA. Histidine 22 (proton acceptor) is an active-site residue. The tRNA site is built by tyrosine 68, asparagine 70, and asparagine 116.

The protein belongs to the PTH family. In terms of assembly, monomer.

Its subcellular location is the cytoplasm. It catalyses the reaction an N-acyl-L-alpha-aminoacyl-tRNA + H2O = an N-acyl-L-amino acid + a tRNA + H(+). Hydrolyzes ribosome-free peptidyl-tRNAs (with 1 or more amino acids incorporated), which drop off the ribosome during protein synthesis, or as a result of ribosome stalling. In terms of biological role, catalyzes the release of premature peptidyl moieties from peptidyl-tRNA molecules trapped in stalled 50S ribosomal subunits, and thus maintains levels of free tRNAs and 50S ribosomes. This is Peptidyl-tRNA hydrolase from Pseudomonas putida (strain GB-1).